Consider the following 334-residue polypeptide: Tetratricopeptide repeat protein 24 (334 aa).

4 TPR repeats span residues G35 to P68, A72 to V105, G112 to T145, and W152 to E185. The disordered stretch occupies residues P220–K258. Polar residues predominate over residues A233–Q246.

The protein is Tetratricopeptide repeat protein 24 (Ttc24) of Mus musculus (Mouse).